A 347-amino-acid polypeptide reads, in one-letter code: Putative GDP-L-fucose synthase 2 (347 aa).

The segment at 1–20 is disordered; it reads MPSQQRSSSGSTAKAGDADG. An NADP(+)-binding site is contributed by 41–47; that stretch reads GHRGMVG. Catalysis depends on tyrosine 168, which acts as the Proton donor/acceptor. Residues lysine 172, 195-198, and histidine 211 contribute to the NADP(+) site; that span reads PNNL. The substrate site is built by arginine 219, tryptophan 234, arginine 241, and glutamate 301.

This sequence belongs to the NAD(P)-dependent epimerase/dehydratase family. Fucose synthase subfamily. Homodimer.

The catalysed reaction is GDP-beta-L-fucose + NADP(+) = GDP-4-dehydro-alpha-D-rhamnose + NADPH + H(+). Its pathway is nucleotide-sugar biosynthesis; GDP-L-fucose biosynthesis via de novo pathway; GDP-L-fucose from GDP-alpha-D-mannose: step 2/2. Functionally, catalyzes the two-step NADP-dependent conversion of GDP-4-dehydro-6-deoxy-D-mannose to GDP-fucose, involving an epimerase and a reductase reaction. The polypeptide is Putative GDP-L-fucose synthase 2 (Oryza sativa subsp. japonica (Rice)).